The primary structure comprises 285 residues: MMKACGFDIGLDHPFFLIAGPCVIESRELAFETAGRLKEITGKLGVPFIYKSSFDKANRSSGKSFRGPGMDEGLKILADVRAQLDVPVLTDVHDIDQVAPVAAVVDMLQTPAFLCRQTDFIRACAATLKPVNIKKGQFLAPHDMLQVARKARDAALEAGGDGNNILVCERGASFGYNNLVSDMRSLAIMRETDCPVVFDATHSVQLPGGQGASSGGQREFVPVLARAAVAVGVAGLFMETHPNPACAMSDGPNAVPLDRMAELLESLVALDRVTKRSGFLENQFV.

Belongs to the KdsA family.

It is found in the cytoplasm. It catalyses the reaction D-arabinose 5-phosphate + phosphoenolpyruvate + H2O = 3-deoxy-alpha-D-manno-2-octulosonate-8-phosphate + phosphate. Its pathway is carbohydrate biosynthesis; 3-deoxy-D-manno-octulosonate biosynthesis; 3-deoxy-D-manno-octulosonate from D-ribulose 5-phosphate: step 2/3. It functions in the pathway bacterial outer membrane biogenesis; lipopolysaccharide biosynthesis. The chain is 2-dehydro-3-deoxyphosphooctonate aldolase from Bordetella parapertussis (strain 12822 / ATCC BAA-587 / NCTC 13253).